The primary structure comprises 375 residues: Succinyl-diaminopimelate desuccinylase (375 aa).

A Zn(2+)-binding site is contributed by histidine 66. The active site involves aspartate 68. Zn(2+) is bound at residue aspartate 99. Glutamate 133 (proton acceptor) is an active-site residue. Residues glutamate 134, glutamate 162, and histidine 348 each contribute to the Zn(2+) site.

This sequence belongs to the peptidase M20A family. DapE subfamily. In terms of assembly, homodimer. Zn(2+) is required as a cofactor. It depends on Co(2+) as a cofactor.

It catalyses the reaction N-succinyl-(2S,6S)-2,6-diaminopimelate + H2O = (2S,6S)-2,6-diaminopimelate + succinate. Its pathway is amino-acid biosynthesis; L-lysine biosynthesis via DAP pathway; LL-2,6-diaminopimelate from (S)-tetrahydrodipicolinate (succinylase route): step 3/3. Functionally, catalyzes the hydrolysis of N-succinyl-L,L-diaminopimelic acid (SDAP), forming succinate and LL-2,6-diaminopimelate (DAP), an intermediate involved in the bacterial biosynthesis of lysine and meso-diaminopimelic acid, an essential component of bacterial cell walls. This chain is Succinyl-diaminopimelate desuccinylase, found in Escherichia coli O7:K1 (strain IAI39 / ExPEC).